The primary structure comprises 204 residues: Holliday junction branch migration complex subunit RuvA (204 aa).

Residues Met-1–Met-64 are domain I. A domain II region spans residues Thr-65–Ala-143. Positions Leu-144–Gly-151 are flexible linker. The interval Val-152–Arg-204 is domain III.

This sequence belongs to the RuvA family. In terms of assembly, homotetramer. Forms an RuvA(8)-RuvB(12)-Holliday junction (HJ) complex. HJ DNA is sandwiched between 2 RuvA tetramers; dsDNA enters through RuvA and exits via RuvB. An RuvB hexamer assembles on each DNA strand where it exits the tetramer. Each RuvB hexamer is contacted by two RuvA subunits (via domain III) on 2 adjacent RuvB subunits; this complex drives branch migration. In the full resolvosome a probable DNA-RuvA(4)-RuvB(12)-RuvC(2) complex forms which resolves the HJ.

The protein resides in the cytoplasm. In terms of biological role, the RuvA-RuvB-RuvC complex processes Holliday junction (HJ) DNA during genetic recombination and DNA repair, while the RuvA-RuvB complex plays an important role in the rescue of blocked DNA replication forks via replication fork reversal (RFR). RuvA specifically binds to HJ cruciform DNA, conferring on it an open structure. The RuvB hexamer acts as an ATP-dependent pump, pulling dsDNA into and through the RuvAB complex. HJ branch migration allows RuvC to scan DNA until it finds its consensus sequence, where it cleaves and resolves the cruciform DNA. The chain is Holliday junction branch migration complex subunit RuvA from Rhizobium etli (strain ATCC 51251 / DSM 11541 / JCM 21823 / NBRC 15573 / CFN 42).